The sequence spans 221 residues: Large ribosomal subunit protein uL4 (221 aa).

The segment at 56 to 83 (HATKTRGMVSGGGRKPWKQKGTGRARQG) is disordered.

It belongs to the universal ribosomal protein uL4 family. Part of the 50S ribosomal subunit.

One of the primary rRNA binding proteins, this protein initially binds near the 5'-end of the 23S rRNA. It is important during the early stages of 50S assembly. It makes multiple contacts with different domains of the 23S rRNA in the assembled 50S subunit and ribosome. Its function is as follows. Forms part of the polypeptide exit tunnel. This is Large ribosomal subunit protein uL4 from Bifidobacterium adolescentis (strain ATCC 15703 / DSM 20083 / NCTC 11814 / E194a).